The following is a 359-amino-acid chain: Glycerol-1-phosphate dehydrogenase [NAD(P)+] (359 aa).

Residues 107 to 111 (GRVID) and 129 to 132 (TAAS) each bind NAD(+). Asp-134 serves as a coordination point for substrate. Residue Ser-138 coordinates NAD(+). Residue Asp-181 participates in substrate binding. Positions 181 and 261 each coordinate Zn(2+). A substrate-binding site is contributed by His-265. Position 277 (His-277) interacts with Zn(2+).

It belongs to the glycerol-1-phosphate dehydrogenase family. Zn(2+) is required as a cofactor.

The protein resides in the cytoplasm. The catalysed reaction is sn-glycerol 1-phosphate + NAD(+) = dihydroxyacetone phosphate + NADH + H(+). It catalyses the reaction sn-glycerol 1-phosphate + NADP(+) = dihydroxyacetone phosphate + NADPH + H(+). The protein operates within membrane lipid metabolism; glycerophospholipid metabolism. Functionally, catalyzes the NAD(P)H-dependent reduction of dihydroxyacetonephosphate (DHAP or glycerone phosphate) to glycerol 1-phosphate (G1P). The G1P thus generated is used as the glycerophosphate backbone of phospholipids in the cellular membranes of Archaea. The sequence is that of Glycerol-1-phosphate dehydrogenase [NAD(P)+] from Methanoregula boonei (strain DSM 21154 / JCM 14090 / 6A8).